A 574-amino-acid chain; its full sequence is Meiotically up-regulated gene 72 protein (574 aa).

Residues 339–374 are disordered; that stretch reads VRAGTPQSSPNFNPAMRRSPVGAASRSPSRSTIGIS. T343 carries the post-translational modification Phosphothreonine. Residues 364 to 374 show a composition bias toward polar residues; sequence RSPSRSTIGIS. At S392 the chain carries Phosphoserine. Disordered regions lie at residues 422–451 and 495–574; these read TSPSGLNPTGRPSRFGGRVRGNPLTMNKAG and RNRR…RRMD. Positions 541 to 554 are enriched in polar residues; that stretch reads LYDTSRYPTRNSKP.

Its subcellular location is the cytoplasm. Its function is as follows. Has a role in meiosis. The chain is Meiotically up-regulated gene 72 protein (mug72) from Schizosaccharomyces pombe (strain 972 / ATCC 24843) (Fission yeast).